The sequence spans 371 residues: Queuine tRNA-ribosyltransferase (371 aa).

D90 (proton acceptor) is an active-site residue. Residues 90 to 94 (DSGGF), D144, Q188, and G215 each bind substrate. Residues 246–252 (GVGTPED) form an RNA binding region. Residue D265 is the Nucleophile of the active site. An RNA binding; important for wobble base 34 recognition region spans residues 270-274 (TRNAR). Zn(2+) contacts are provided by C303, C305, C308, and H334.

The protein belongs to the queuine tRNA-ribosyltransferase family. As to quaternary structure, homodimer. Within each dimer, one monomer is responsible for RNA recognition and catalysis, while the other monomer binds to the replacement base PreQ1. Zn(2+) serves as cofactor.

It carries out the reaction 7-aminomethyl-7-carbaguanine + guanosine(34) in tRNA = 7-aminomethyl-7-carbaguanosine(34) in tRNA + guanine. The protein operates within tRNA modification; tRNA-queuosine biosynthesis. Catalyzes the base-exchange of a guanine (G) residue with the queuine precursor 7-aminomethyl-7-deazaguanine (PreQ1) at position 34 (anticodon wobble position) in tRNAs with GU(N) anticodons (tRNA-Asp, -Asn, -His and -Tyr). Catalysis occurs through a double-displacement mechanism. The nucleophile active site attacks the C1' of nucleotide 34 to detach the guanine base from the RNA, forming a covalent enzyme-RNA intermediate. The proton acceptor active site deprotonates the incoming PreQ1, allowing a nucleophilic attack on the C1' of the ribose to form the product. After dissociation, two additional enzymatic reactions on the tRNA convert PreQ1 to queuine (Q), resulting in the hypermodified nucleoside queuosine (7-(((4,5-cis-dihydroxy-2-cyclopenten-1-yl)amino)methyl)-7-deazaguanosine). In Chromobacterium violaceum (strain ATCC 12472 / DSM 30191 / JCM 1249 / CCUG 213 / NBRC 12614 / NCIMB 9131 / NCTC 9757 / MK), this protein is Queuine tRNA-ribosyltransferase.